We begin with the raw amino-acid sequence, 101 residues long: Large ribosomal subunit protein bL28 (101 aa).

This sequence belongs to the bacterial ribosomal protein bL28 family.

The chain is Large ribosomal subunit protein bL28 from Caulobacter sp. (strain K31).